Here is a 171-residue protein sequence, read N- to C-terminus: Co-chaperone protein HscB (171 aa).

In terms of domain architecture, J spans 2 to 74 (DYFTLFGLPA…LMRAEYLLSL (73 aa)).

Belongs to the HscB family. Interacts with HscA and stimulates its ATPase activity. Interacts with IscU.

Its function is as follows. Co-chaperone involved in the maturation of iron-sulfur cluster-containing proteins. Seems to help targeting proteins to be folded toward HscA. The polypeptide is Co-chaperone protein HscB (Escherichia coli (strain SMS-3-5 / SECEC)).